The primary structure comprises 761 residues: Signal transducer and transcription activator (761 aa).

The region spanning 594–658 (WKAGCIMGFI…APWTARDFQV (65 aa)) is the SH2 domain. Tyr711 carries the post-translational modification Phosphotyrosine; by JAK.

This sequence belongs to the transcription factor STAT family. Forms a homodimer or a heterodimer with a related family member. In terms of processing, tyrosine phosphorylated by hopscotch. Phosphorylation is required for DNA-binding activity and dimerization.

It is found in the cytoplasm. It localises to the nucleus. Its function is as follows. Might play a role in signal transduction and activation of transcription. Plays an important role in the segmental pattern formation in the early embryo by activating specific stripes of pair rule gene expression in early development as part of the Janus kinase-STAT pathway. Might play a role in male germline stem cell maintenance. This is Signal transducer and transcription activator (Stat92E) from Drosophila melanogaster (Fruit fly).